Consider the following 2381-residue polypeptide: Myb-like protein U (2381 aa).

Disordered stretches follow at residues 1-85 (MKTK…TSNN), 148-167 (SSSG…GGIS), 178-492 (PTIP…NNNN), and 641-696 (NINN…GDEM). Low complexity-rich tracts occupy residues 30–41 (SKSSSKVSQSSS) and 64–79 (TIPA…PTLT). Composition is skewed to low complexity over residues 192–204 (NLSS…NILS), 225–261 (ENVN…SSSS), and 291–315 (SNKS…NNKK). Residues 331–343 (SEYDSSDSSDMDL) show a composition bias toward acidic residues. Over residues 363–405 (TTKPNNSNSNNNNNNNSINSTIPASNNINSANNSKTTNKNITS) the composition is skewed to low complexity. Residues 421–430 (SETPILTSVK) are compositionally biased toward polar residues. Composition is skewed to low complexity over residues 435–492 (QQIP…NNNN) and 641–692 (NINN…NNNN). A Myb-like domain is found at 856–899 (WHEEEKLLFRELFCAYGRDWQMVSTLMCGTKSPTQIKNFYYDVR). Disordered stretches follow at residues 932 to 1024 (KPEQ…ETPP), 1068 to 1093 (INQS…NINP), 1145 to 1207 (TSST…SNQE), 1295 to 1339 (STTT…PPID), 1422 to 1474 (PYYP…LSTP), 1597 to 1647 (PPAT…TTIV), 1667 to 1849 (PIVK…PPPV), 1961 to 1985 (TTVP…NGLA), 2055 to 2106 (TSTV…NGLT), and 2122 to 2280 (LSGI…NKND). The segment covering 936-953 (NVNSNNNNNGGGNSLKDG) has biased composition (low complexity). The segment covering 982 to 995 (VKKKSRTASKRSFR) has biased composition (basic residues). Polar residues predominate over residues 1000 to 1013 (ANETNRTPKNQPKP). 4 stretches are compositionally biased toward low complexity: residues 1069–1092 (NQSS…NNIN), 1145–1186 (TSST…TGSA), 1195–1205 (VNNNNNNNLSN), and 1306–1325 (TTTP…QLQQ). Residues 1326 to 1337 (LPPPPPPPPKPP) show a composition bias toward pro residues. Residues 1427 to 1474 (PSSTTTNSATSTPTSTPTSTPSTSASTLTPTSTPTSTPVPAPTSLSTP) are compositionally biased toward low complexity. Positions 1597–1606 (PPATITPILP) are enriched in pro residues. Residues 1618–1637 (SSSSSSSSSSSSSSSSSSSS) show a composition bias toward low complexity. Polar residues-rich tracts occupy residues 1638-1647 (TTKNNSTTIV) and 1671-1701 (QESN…KTLL). Low complexity-rich tracts occupy residues 1702–1735 (PSNS…NPSS) and 1743–1809 (TSNK…TLKP). Residues 1829–1844 (APTNSTNQNTIPNATT) are compositionally biased toward polar residues. Low complexity-rich tracts occupy residues 1961 to 1970 (TTVPGTTTTT) and 2065 to 2097 (NNMT…QQST). Residues 2129–2138 (NTLSGKSPTP) are compositionally biased toward polar residues. Positions 2154–2209 (PSLSSSSANPISITNNTTSLSQQSNTTNTMPSTVSLSSGSTSINSNSSNSKSLRSP) are enriched in low complexity. Residues 2210–2278 (KSSDNDGKES…NNNDKFDSNK (69 aa)) are compositionally biased toward basic and acidic residues.

The polypeptide is Myb-like protein U (mybU) (Dictyostelium discoideum (Social amoeba)).